The sequence spans 169 residues: Transcription antitermination protein NusB (169 aa).

It belongs to the NusB family.

Involved in transcription antitermination. Required for transcription of ribosomal RNA (rRNA) genes. Binds specifically to the boxA antiterminator sequence of the ribosomal RNA (rrn) operons. The sequence is that of Transcription antitermination protein NusB from Rhodococcus opacus (strain B4).